The chain runs to 190 residues: Putative manganese efflux pump MntP (190 aa).

6 helical membrane-spanning segments follow: residues 3–23, 41–61, 69–89, 105–125, 133–153, and 168–188; these read PISLLFLALAMSTDAFAAALG, LIFGAIETITPVIGWGIGQVA, DHWIAFTLLLVLGLHMIYNGL, FWILAVTAFATSIDALAVGVG, IMVAALAIGLATTVMVTIGVM, and IVGGIVLIVVGTTILYEHLTA.

It belongs to the MntP (TC 9.B.29) family.

It localises to the cell inner membrane. Probably functions as a manganese efflux pump. In Pseudomonas syringae pv. tomato (strain ATCC BAA-871 / DC3000), this protein is Putative manganese efflux pump MntP.